Here is a 398-residue protein sequence, read N- to C-terminus: Ribosomal RNA small subunit methyltransferase B (398 aa).

S-adenosyl-L-methionine is bound by residues 221-227, aspartate 242, aspartate 268, and aspartate 283; that span reads CGGAGLK. Cysteine 336 acts as the Nucleophile in catalysis.

Belongs to the class I-like SAM-binding methyltransferase superfamily. RsmB/NOP family.

It localises to the cytoplasm. It carries out the reaction cytidine(967) in 16S rRNA + S-adenosyl-L-methionine = 5-methylcytidine(967) in 16S rRNA + S-adenosyl-L-homocysteine + H(+). Functionally, specifically methylates the cytosine at position 967 (m5C967) of 16S rRNA. The chain is Ribosomal RNA small subunit methyltransferase B from Thermus thermophilus (strain ATCC 27634 / DSM 579 / HB8).